Consider the following 484-residue polypeptide: Glucan endo-1,3-beta-glucosidase 5 (484 aa).

Positions 1 to 26 (MLFKGVFAVFFVITLLYASLLIEVEG) are cleaved as a signal peptide. N-linked (GlcNAc...) asparagine glycosylation is present at Asn-102. Glu-122 (proton donor) is an active-site residue. 2 N-linked (GlcNAc...) asparagine glycosylation sites follow: Asn-129 and Asn-260. Glu-267 serves as the catalytic Nucleophile. A disulfide bond links Cys-366 and Cys-428. N-linked (GlcNAc...) asparagine glycosylation occurs at Asn-409. Ala-460 carries GPI-anchor amidated alanine lipidation. Positions 461–484 (SAMMPITRSTAVLLLLSICLYIVL) are cleaved as a propeptide — removed in mature form.

It belongs to the glycosyl hydrolase 17 family. Post-translationally, contains two additional disulfide bonds.

It is found in the cell membrane. The enzyme catalyses Hydrolysis of (1-&gt;3)-beta-D-glucosidic linkages in (1-&gt;3)-beta-D-glucans.. In Arabidopsis thaliana (Mouse-ear cress), this protein is Glucan endo-1,3-beta-glucosidase 5.